We begin with the raw amino-acid sequence, 344 residues long: ATPase GET3 (344 aa).

Residue 26–33 (KGGVGKTT) coordinates ATP. Residue aspartate 57 is part of the active site. Glutamate 239 and asparagine 266 together coordinate ATP. 2 residues coordinate Zn(2+): cysteine 276 and cysteine 279.

Belongs to the arsA ATPase family. As to quaternary structure, homodimer. Component of the Golgi to ER traffic (GET) complex, which is composed of GET1, GET2 and GET3. Within the complex, GET1 and GET2 form a heterotetramer which is stabilized by phosphatidylinositol binding and which binds to the GET3 homodimer. Interacts with the chloride channel protein GEF1.

It is found in the cytoplasm. The protein localises to the endoplasmic reticulum. Its subcellular location is the golgi apparatus. Functionally, ATPase required for the post-translational delivery of tail-anchored (TA) proteins to the endoplasmic reticulum. Recognizes and selectively binds the transmembrane domain of TA proteins in the cytosol. This complex then targets to the endoplasmic reticulum by membrane-bound receptors GET1 and GET2, where the tail-anchored protein is released for insertion. This process is regulated by ATP binding and hydrolysis. ATP binding drives the homodimer towards the closed dimer state, facilitating recognition of newly synthesized TA membrane proteins. ATP hydrolysis is required for insertion. Subsequently, the homodimer reverts towards the open dimer state, lowering its affinity for the GET1-GET2 receptor, and returning it to the cytosol to initiate a new round of targeting. Cooperates with the HDEL receptor ERD2 to mediate the ATP-dependent retrieval of resident ER proteins that contain a C-terminal H-D-E-L retention signal from the Golgi to the ER. Involved in low-level resistance to the oxyanions arsenite and arsenate, and in heat tolerance. The sequence is that of ATPase GET3 from Komagataella phaffii (strain GS115 / ATCC 20864) (Yeast).